Here is a 278-residue protein sequence, read N- to C-terminus: Cytoplasmic envelopment protein 1 (278 aa).

This sequence belongs to the herpesviridae cytoplasmic envelopment protein 1 family. In terms of assembly, interacts with BSRF1 tegument protein; the BBRF2-BSRF1 complexes oligomerize and might play a role in tethering the viral nucleocapsids to the host Golgi membrane during secondary envelopment.

Its subcellular location is the virion. The protein localises to the virion tegument. The protein resides in the host cytoplasm. It is found in the host Golgi apparatus. Its function is as follows. Plays a critical role in cytoplasmic virus egress. Participates in the final step of tegumentation and envelope acquisition within the host cytoplasm. This Homo sapiens (Human) protein is Cytoplasmic envelopment protein 1.